The sequence spans 122 residues: Large ribosomal subunit protein uL18 (122 aa).

It belongs to the universal ribosomal protein uL18 family. In terms of assembly, part of the 50S ribosomal subunit; part of the 5S rRNA/L5/L18/L25 subcomplex. Contacts the 5S and 23S rRNAs.

In terms of biological role, this is one of the proteins that bind and probably mediate the attachment of the 5S RNA into the large ribosomal subunit, where it forms part of the central protuberance. In Ruminiclostridium cellulolyticum (strain ATCC 35319 / DSM 5812 / JCM 6584 / H10) (Clostridium cellulolyticum), this protein is Large ribosomal subunit protein uL18.